The chain runs to 499 residues: 2-isopropylmalate synthase (499 aa).

The Pyruvate carboxyltransferase domain occupies 5–267 (IKIFDTTLRD…ETGINLGEIA (263 aa)). The Mn(2+) site is built by aspartate 14, histidine 202, histidine 204, and asparagine 238. Residues 391-499 (SVEVLHVISG…YLSALNRIRR (109 aa)) form a regulatory domain region.

It belongs to the alpha-IPM synthase/homocitrate synthase family. LeuA type 1 subfamily. Mn(2+) is required as a cofactor.

It localises to the cytoplasm. The catalysed reaction is 3-methyl-2-oxobutanoate + acetyl-CoA + H2O = (2S)-2-isopropylmalate + CoA + H(+). It functions in the pathway amino-acid biosynthesis; L-leucine biosynthesis; L-leucine from 3-methyl-2-oxobutanoate: step 1/4. Catalyzes the condensation of the acetyl group of acetyl-CoA with 3-methyl-2-oxobutanoate (2-ketoisovalerate) to form 3-carboxy-3-hydroxy-4-methylpentanoate (2-isopropylmalate). The polypeptide is 2-isopropylmalate synthase (Pyrococcus furiosus (strain ATCC 43587 / DSM 3638 / JCM 8422 / Vc1)).